The primary structure comprises 330 residues: Quinone oxidoreductase (330 aa).

The residue at position 2 (A2) is an N-acetylalanine. K23 is modified (N6-acetyllysine). Residues Y53, 158–161 (SGGV), G181, H200, N229, 246–249 (VGSK), and 269–271 (VTL) each bind NADP(+). S248 carries the post-translational modification Phosphoserine.

It belongs to the zinc-containing alcohol dehydrogenase family. Quinone oxidoreductase subfamily. As to quaternary structure, homotetramer.

The protein localises to the cytoplasm. It catalyses the reaction 2 a quinone + NADPH + H(+) = 2 a 1,4-benzosemiquinone + NADP(+). Functionally, does not have alcohol dehydrogenase activity. Binds NADP and acts through a one-electron transfer process. Orthoquinones, such as 1,2-naphthoquinone or 9,10-phenanthrenequinone, are the best substrates (in vitro). May act in the detoxification of xenobiotics. Interacts with (AU)-rich elements (ARE) in the 3'-UTR of target mRNA species and enhances their stability. NADPH binding interferes with mRNA binding. This Lama guanicoe (Guanaco) protein is Quinone oxidoreductase (CRYZ).